The chain runs to 37 residues: Large ribosomal subunit protein bL36 (37 aa).

The protein belongs to the bacterial ribosomal protein bL36 family.

This Salinispora tropica (strain ATCC BAA-916 / DSM 44818 / JCM 13857 / NBRC 105044 / CNB-440) protein is Large ribosomal subunit protein bL36.